The chain runs to 396 residues: ATP-dependent RNA helicase eIF4A (396 aa).

The disordered stretch occupies residues 1 to 20 (MADKGLEDVPEGQIESNYDE). The short motif at 23–51 (DSFDAMNLKAELLRGVYAYGFERPSAIQQ) is the Q motif element. Residues 54-224 (IMPVIKGHDV…TKFMRDPVRI (171 aa)) enclose the Helicase ATP-binding domain. 67–74 (AQSGTGKT) lines the ATP pocket. A DEAD box motif is present at residues 172–175 (DEAD). Residues 235–396 (GIKQFYIAVE…EMPMNVADLI (162 aa)) form the Helicase C-terminal domain.

This sequence belongs to the DEAD box helicase family. eIF4A subfamily. In terms of assembly, component of the eIF4F complex, which composition varies with external and internal environmental conditions. It is composed of at least eIF4A, eIF4E and eIF4G.

It localises to the cytoplasm. It carries out the reaction ATP + H2O = ADP + phosphate + H(+). In terms of biological role, ATP-dependent RNA helicase which is a subunit of the eIF4F complex involved in cap recognition and is required for mRNA binding to ribosome. In the current model of translation initiation, eIF4A unwinds RNA secondary structures in the 5'-UTR of mRNAs which is necessary to allow efficient binding of the small ribosomal subunit, and subsequent scanning for the initiator codon. The chain is ATP-dependent RNA helicase eIF4A (TIF1) from Phaeosphaeria nodorum (strain SN15 / ATCC MYA-4574 / FGSC 10173) (Glume blotch fungus).